The primary structure comprises 689 residues: Glycine--tRNA ligase beta subunit (689 aa).

The protein belongs to the class-II aminoacyl-tRNA synthetase family. In terms of assembly, tetramer of two alpha and two beta subunits.

It localises to the cytoplasm. It carries out the reaction tRNA(Gly) + glycine + ATP = glycyl-tRNA(Gly) + AMP + diphosphate. In Escherichia coli O139:H28 (strain E24377A / ETEC), this protein is Glycine--tRNA ligase beta subunit.